A 606-amino-acid polypeptide reads, in one-letter code: Medium-chain acyl-CoA ligase ACSF2, mitochondrial (606 aa).

Residues 1-13 (MSSKILLTNLRTS) constitute a mitochondrion transit peptide. ATP-binding positions include 256 to 264 (TSGTTGKPK), Asp484, Arg499, and Lys590.

This sequence belongs to the ATP-dependent AMP-binding enzyme family.

It localises to the mitochondrion. It carries out the reaction a medium-chain fatty acid + ATP + CoA = a medium-chain fatty acyl-CoA + AMP + diphosphate. It catalyses the reaction octanoate + ATP + CoA = octanoyl-CoA + AMP + diphosphate. In terms of biological role, acyl-CoA synthases catalyze the initial reaction in fatty acid metabolism, by forming a thioester with CoA. Has some preference toward medium-chain substrates. Plays a role in adipocyte differentiation. The polypeptide is Medium-chain acyl-CoA ligase ACSF2, mitochondrial (Danio rerio (Zebrafish)).